The chain runs to 526 residues: Exodeoxyribonuclease 7 large subunit (526 aa).

The interval 499 to 526 (AGEDGTPSQAPKKRPARAGEPTKQGSLF) is disordered.

It belongs to the XseA family. As to quaternary structure, heterooligomer composed of large and small subunits.

It localises to the cytoplasm. It catalyses the reaction Exonucleolytic cleavage in either 5'- to 3'- or 3'- to 5'-direction to yield nucleoside 5'-phosphates.. Its function is as follows. Bidirectionally degrades single-stranded DNA into large acid-insoluble oligonucleotides, which are then degraded further into small acid-soluble oligonucleotides. This chain is Exodeoxyribonuclease 7 large subunit, found in Sinorhizobium medicae (strain WSM419) (Ensifer medicae).